A 446-amino-acid chain; its full sequence is Methionine aminopeptidase 2-1 (446 aa).

The segment at Met-1–Phe-88 is disordered. Acidic residues predominate over residues Glu-32 to Gly-44. Over residues Ala-57–Gly-72 the composition is skewed to basic residues. Residue His-196 coordinates substrate. Asp-216, Asp-227, and His-296 together coordinate a divalent metal cation. Substrate is bound at residue His-304. Residues Glu-332 and Glu-427 each contribute to the a divalent metal cation site.

Belongs to the peptidase M24A family. Methionine aminopeptidase eukaryotic type 2 subfamily. The cofactor is Co(2+). Zn(2+) is required as a cofactor. Mn(2+) serves as cofactor. It depends on Fe(2+) as a cofactor.

It is found in the cytoplasm. The catalysed reaction is Release of N-terminal amino acids, preferentially methionine, from peptides and arylamides.. In terms of biological role, cotranslationally removes the N-terminal methionine from nascent proteins. The N-terminal methionine is often cleaved when the second residue in the primary sequence is small and uncharged (Met-Ala-, Cys, Gly, Pro, Ser, Thr, or Val). The chain is Methionine aminopeptidase 2-1 from Blastomyces gilchristii (strain SLH14081) (Blastomyces dermatitidis).